Consider the following 340-residue polypeptide: Replication factor C subunit 5 (340 aa).

Met1 is modified (N-acetylmethionine). ATP is bound at residue 60-67 (GPPGTGKT).

Belongs to the activator 1 small subunits family. Subunit of the RFC complex, an heteropentameric complex consisting of a large subunit RFC1 and four small subunits RFC2, RFC3, RFC4 and RFC5; the RFC complex interacts with PCNA. Forms an heterotetrameric complex with RFC2, RFC3 and RFC4; this complex has ATPase activity but is not stimulated by PCNA. The heterotetramer of subunits RFC2, RFC3, RFC4 and RFC5 interacts with RAD17.

Its subcellular location is the nucleus. Subunit of the replication factor C (RFC) complex which acts during elongation of primed DNA templates by DNA polymerases delta and epsilon, and is necessary for ATP-dependent loading of proliferating cell nuclear antigen (PCNA) onto primed DNA. The chain is Replication factor C subunit 5 (RFC5) from Homo sapiens (Human).